Reading from the N-terminus, the 244-residue chain is Phosphonates import ATP-binding protein PhnC 2 (244 aa).

The ABC transporter domain occupies 3–242 (LRVEGLKKVY…ELTDYTVDQL (240 aa)). Residue 36 to 43 (GPSGAGKS) coordinates ATP.

This sequence belongs to the ABC transporter superfamily. Phosphonates importer (TC 3.A.1.9.1) family. As to quaternary structure, the complex is composed of two ATP-binding proteins (PhnC), two transmembrane proteins (PhnE) and a solute-binding protein (PhnD).

Its subcellular location is the cell membrane. The catalysed reaction is phosphonate(out) + ATP + H2O = phosphonate(in) + ADP + phosphate + H(+). Its function is as follows. Part of the ABC transporter complex PhnCDE involved in phosphonates import. Responsible for energy coupling to the transport system. This chain is Phosphonates import ATP-binding protein PhnC 2, found in Halalkalibacterium halodurans (strain ATCC BAA-125 / DSM 18197 / FERM 7344 / JCM 9153 / C-125) (Bacillus halodurans).